We begin with the raw amino-acid sequence, 271 residues long: D-methionine-binding lipoprotein MetQ (271 aa).

Residues 1–22 (MAFKFKTFAAVGALIGSLALVG) form the signal peptide. A lipid anchor (N-palmitoyl cysteine) is attached at Cys-23. A lipid anchor (S-diacylglycerol cysteine) is attached at Cys-23.

The protein belongs to the NlpA lipoprotein family.

The protein localises to the cell membrane. Its function is as follows. This protein is a component of a D-methionine permease, a binding protein-dependent, ATP-driven transport system. The protein is D-methionine-binding lipoprotein MetQ (metQ) of Escherichia coli (strain K12).